An 89-amino-acid chain; its full sequence is Small ribosomal subunit protein uS15 (89 aa).

It belongs to the universal ribosomal protein uS15 family. Part of the 30S ribosomal subunit. Forms a bridge to the 50S subunit in the 70S ribosome, contacting the 23S rRNA.

One of the primary rRNA binding proteins, it binds directly to 16S rRNA where it helps nucleate assembly of the platform of the 30S subunit by binding and bridging several RNA helices of the 16S rRNA. Functionally, forms an intersubunit bridge (bridge B4) with the 23S rRNA of the 50S subunit in the ribosome. This is Small ribosomal subunit protein uS15 from Escherichia coli O157:H7.